Consider the following 300-residue polypeptide: Protein SPEAR4 (300 aa).

Residues 1–10 are compositionally biased toward polar residues; it reads MCSKTSSVSY. The disordered stretch occupies residues 1 to 45; that stretch reads MCSKTSSVSYGNREDDDNYSSLCPKKQKHNNGGKKRVPRRGPGVA. Over residues 25–39 the composition is skewed to basic residues; it reads KKQKHNNGGKKRVPR. The SPL motif lies at 40 to 48; that stretch reads RGPGVAELE. The EAR motif lies at 294 to 300; it reads IDLRLKL.

As to quaternary structure, interacts with SPL and SPEAR2. In terms of tissue distribution, expressed in leaves.

Adapter-like transcriptional repressor recruiting TPL/TPR coepressors to inhibit TCP transcription factors. May be involved in leaf development. The protein is Protein SPEAR4 of Arabidopsis thaliana (Mouse-ear cress).